A 503-amino-acid polypeptide reads, in one-letter code: Lysine--tRNA ligase (503 aa).

Residues E414 and E421 each coordinate Mg(2+).

It belongs to the class-II aminoacyl-tRNA synthetase family. In terms of assembly, homodimer. Mg(2+) serves as cofactor.

It is found in the cytoplasm. It carries out the reaction tRNA(Lys) + L-lysine + ATP = L-lysyl-tRNA(Lys) + AMP + diphosphate. The sequence is that of Lysine--tRNA ligase from Laribacter hongkongensis (strain HLHK9).